Here is a 505-residue protein sequence, read N- to C-terminus: Cobyric acid synthase (505 aa).

Residues 251–444 (DIDVAVIKLP…IHGIFDNSEF (194 aa)) enclose the GATase cobBQ-type domain. Residue C332 is the Nucleophile of the active site. Residue H436 is part of the active site.

Belongs to the CobB/CobQ family. CobQ subfamily.

Its pathway is cofactor biosynthesis; adenosylcobalamin biosynthesis. Catalyzes amidations at positions B, D, E, and G on adenosylcobyrinic A,C-diamide. NH(2) groups are provided by glutamine, and one molecule of ATP is hydrogenolyzed for each amidation. The polypeptide is Cobyric acid synthase (Clostridium novyi (strain NT)).